The primary structure comprises 234 residues: Small ribosomal subunit protein uS10m (234 aa).

A mitochondrion-targeting transit peptide spans 1–23 (MLRIGYRGFSTRSRVFKLSPQEY).

It belongs to the universal ribosomal protein uS10 family. As to quaternary structure, component of the mitochondrial small ribosomal subunit (mt-SSU).

The protein localises to the mitochondrion. In terms of biological role, component of the mitochondrial ribosome (mitoribosome), a dedicated translation machinery responsible for the synthesis of mitochondrial genome-encoded proteins, including at least some of the essential transmembrane subunits of the mitochondrial respiratory chain. The mitoribosomes are attached to the mitochondrial inner membrane and translation products are cotranslationally integrated into the membrane. The polypeptide is Small ribosomal subunit protein uS10m (RSM10) (Candida albicans (strain SC5314 / ATCC MYA-2876) (Yeast)).